A 576-amino-acid polypeptide reads, in one-letter code: N-acetylmuramoyl-L-alanine amidase (576 aa).

The N-terminal stretch at 1–21 (MAQGVLWILLGLLLWSDPGTA) is a signal peptide. Residue N77 is glycosylated (N-linked (GlcNAc...) asparagine). At S239 the chain carries Phosphoserine. 2 positions are modified to deamidated asparagine: N274 and N322. N-linked (GlcNAc...) asparagine glycosylation occurs at N367. One can recognise an N-acetylmuramoyl-L-alanine amidase domain in the interval 406-532 (FLYVHHTYVP…RQLVRTDCPG (127 aa)). H410 serves as a coordination point for Zn(2+). The cysteines at positions 419 and 425 are disulfide-linked. N-linked (GlcNAc...) asparagine glycosylation is present at N485. Zn(2+) contacts are provided by H522 and C530. The disordered stretch occupies residues 550-576 (KPRPARSVSKRSRREPPPRTLPATDLQ).

It belongs to the N-acetylmuramoyl-L-alanine amidase 2 family. Requires Zn(2+) as cofactor. Strongly expressed in liver and fetal liver, and secreted into serum. Expressed to a much lesser extent in transverse colon, lymph nodes, heart, thymus, pancreas, descending colon, stomach and testis. Isoform 2 is not detected in the liver or serum.

Its subcellular location is the secreted. It localises to the membrane. It carries out the reaction Hydrolyzes the link between N-acetylmuramoyl residues and L-amino acid residues in certain cell-wall glycopeptides.. May play a scavenger role by digesting biologically active peptidoglycan (PGN) into biologically inactive fragments. Has no direct bacteriolytic activity. The sequence is that of N-acetylmuramoyl-L-alanine amidase (PGLYRP2) from Homo sapiens (Human).